The following is a 316-amino-acid chain: Ribose-phosphate pyrophosphokinase (316 aa).

Residues 39–41 (DGE) and 98–99 (RQ) contribute to the ATP site. Mg(2+) contacts are provided by His-133 and Asp-172. Lys-195 is an active-site residue. D-ribose 5-phosphate is bound by residues Arg-197, Asp-221, and 225–229 (DTGGT).

The protein belongs to the ribose-phosphate pyrophosphokinase family. Class I subfamily. In terms of assembly, homohexamer. Requires Mg(2+) as cofactor.

Its subcellular location is the cytoplasm. The enzyme catalyses D-ribose 5-phosphate + ATP = 5-phospho-alpha-D-ribose 1-diphosphate + AMP + H(+). It functions in the pathway metabolic intermediate biosynthesis; 5-phospho-alpha-D-ribose 1-diphosphate biosynthesis; 5-phospho-alpha-D-ribose 1-diphosphate from D-ribose 5-phosphate (route I): step 1/1. Functionally, involved in the biosynthesis of the central metabolite phospho-alpha-D-ribosyl-1-pyrophosphate (PRPP) via the transfer of pyrophosphoryl group from ATP to 1-hydroxyl of ribose-5-phosphate (Rib-5-P). The chain is Ribose-phosphate pyrophosphokinase from Ralstonia nicotianae (strain ATCC BAA-1114 / GMI1000) (Ralstonia solanacearum).